We begin with the raw amino-acid sequence, 317 residues long: Ataxin-3 homolog (317 aa).

Residues 7-178 (INSIFFEHQE…RSDADDLISL (172 aa)) enclose the Josephin domain. The active-site Nucleophile is cysteine 20. The active-site Proton acceptor is histidine 117. Asparagine 132 is a catalytic residue. UIM domains lie at 219–239 (SQEE…KDGS) and 247–264 (EIDE…QAPG). The disordered stretch occupies residues 254-317 (RKAIELSQAP…KKKEERNDEK (64 aa)). The segment covering 276-293 (RSRSSTPPGASEPFSNAE) has biased composition (polar residues). Residues 294 to 317 (QQRRDRQKFLERFEKKKEERNDEK) show a composition bias toward basic and acidic residues. The interaction with cdc-48.1 and cdc-48.2 stretch occupies residues 296–299 (RRDR).

In terms of assembly, forms a complex composed of deubiquitinating enzyme atx-3, adapter ubxn-5 and cdc-48.1. Forms a complex composed of deubiquitinating enzyme atx-3, E4 ubiquitin-protein ligase ufd-2 and cdc-48.1. Interacts (via RRDR motif) with cdc-48.1 (via N-terminus) and cdc-48.2 (via N-terminus); the interaction with cdc-48.1 is not required for atx-3 enzymatic activity. Interacts (via C-terminus) with ubxn-5. May interact with ned-8. In terms of tissue distribution, expressed in germline (at protein level). Expressed in spermatheca, pharynx, dorsal and ventral cords, some head neurons, hypodermis, body wall muscles and coelomocytes.

It localises to the cytoplasm. It is found in the nucleus. Its subcellular location is the nucleolus. It catalyses the reaction Thiol-dependent hydrolysis of ester, thioester, amide, peptide and isopeptide bonds formed by the C-terminal Gly of ubiquitin (a 76-residue protein attached to proteins as an intracellular targeting signal).. In terms of biological role, acts as a chain editing deubiquitinating enzyme that binds and cleaves 'Lys-48'-linked polyubiquitin chains, with a preference for chains containing four or more ubiquitin molecules thereby modulating protein degradation by the ubiquitin-proteasome pathway. Probably by regulating the IGF-1-insulin-like pathway, regulates lifespan. Regulates germline DNA double-strand-break repair and apoptosis in response to DNA damage by recruiting E4 ubiquitin-protein ligase ufd-2 to DNA repair foci. Interacts with key regulators of transcription and represses transcription. Acts as a histone-binding protein that regulates transcription. The sequence is that of Ataxin-3 homolog (atx-3) from Caenorhabditis elegans.